The chain runs to 218 residues: Small ribosomal subunit protein uS3c (218 aa).

Positions 47-118 (VQKNMRTSSG…KLNIAVTRIA (72 aa)) constitute a KH type-2 domain.

The protein belongs to the universal ribosomal protein uS3 family. As to quaternary structure, part of the 30S ribosomal subunit.

It localises to the plastid. It is found in the chloroplast. The sequence is that of Small ribosomal subunit protein uS3c (rps3) from Solanum bulbocastanum (Wild potato).